The chain runs to 122 residues: Large ribosomal subunit protein uL14c (122 aa).

Belongs to the universal ribosomal protein uL14 family. In terms of assembly, part of the 50S ribosomal subunit.

It is found in the plastid. Its subcellular location is the chloroplast. Its function is as follows. Binds to 23S rRNA. This is Large ribosomal subunit protein uL14c from Pinus koraiensis (Korean pine).